The following is a 440-amino-acid chain: Proline--tRNA ligase (440 aa).

Belongs to the class-II aminoacyl-tRNA synthetase family. ProS type 2 subfamily. In terms of assembly, homodimer.

Its subcellular location is the cytoplasm. The catalysed reaction is tRNA(Pro) + L-proline + ATP = L-prolyl-tRNA(Pro) + AMP + diphosphate. Functionally, catalyzes the attachment of proline to tRNA(Pro) in a two-step reaction: proline is first activated by ATP to form Pro-AMP and then transferred to the acceptor end of tRNA(Pro). The polypeptide is Proline--tRNA ligase (Azorhizobium caulinodans (strain ATCC 43989 / DSM 5975 / JCM 20966 / LMG 6465 / NBRC 14845 / NCIMB 13405 / ORS 571)).